We begin with the raw amino-acid sequence, 272 residues long: FAS1 domain-containing protein YDR262W (272 aa).

Residues 1–26 form the signal peptide; that stretch reads MIFNLPVSVLLYFSLIWAMEPSFVRG. An FAS1 domain is found at 100–269; it reads PLSLESKLSL…GVILMVDFTL (170 aa).

It is found in the vacuole. This chain is FAS1 domain-containing protein YDR262W, found in Saccharomyces cerevisiae (strain ATCC 204508 / S288c) (Baker's yeast).